The primary structure comprises 311 residues: Aspartate carbamoyltransferase catalytic subunit (311 aa).

Carbamoyl phosphate contacts are provided by Arg55 and Thr56. An L-aspartate-binding site is contributed by Lys85. Residues Arg106, His135, and Gln138 each contribute to the carbamoyl phosphate site. L-aspartate is bound by residues Arg168 and Arg230. Carbamoyl phosphate contacts are provided by Leu268 and Pro269.

It belongs to the aspartate/ornithine carbamoyltransferase superfamily. ATCase family. As to quaternary structure, heterododecamer (2C3:3R2) of six catalytic PyrB chains organized as two trimers (C3), and six regulatory PyrI chains organized as three dimers (R2).

It catalyses the reaction carbamoyl phosphate + L-aspartate = N-carbamoyl-L-aspartate + phosphate + H(+). It functions in the pathway pyrimidine metabolism; UMP biosynthesis via de novo pathway; (S)-dihydroorotate from bicarbonate: step 2/3. Functionally, catalyzes the condensation of carbamoyl phosphate and aspartate to form carbamoyl aspartate and inorganic phosphate, the committed step in the de novo pyrimidine nucleotide biosynthesis pathway. The sequence is that of Aspartate carbamoyltransferase catalytic subunit from Yersinia enterocolitica serotype O:8 / biotype 1B (strain NCTC 13174 / 8081).